The chain runs to 447 residues: Signal recognition particle 54 kDa protein (447 aa).

GTP-binding positions include 103-110 (GVQGSGKT), 185-189 (DTAGR), and 245-248 (TKMD).

Belongs to the GTP-binding SRP family. SRP54 subfamily. As to quaternary structure, part of the signal recognition particle protein translocation system, which is composed of SRP and FtsY. Archaeal SRP consists of a 7S RNA molecule of 300 nucleotides and two protein subunits: SRP54 and SRP19.

The protein localises to the cytoplasm. It carries out the reaction GTP + H2O = GDP + phosphate + H(+). Involved in targeting and insertion of nascent membrane proteins into the cytoplasmic membrane. Binds to the hydrophobic signal sequence of the ribosome-nascent chain (RNC) as it emerges from the ribosomes. The SRP-RNC complex is then targeted to the cytoplasmic membrane where it interacts with the SRP receptor FtsY. In Saccharolobus islandicus (strain Y.N.15.51 / Yellowstone #2) (Sulfolobus islandicus), this protein is Signal recognition particle 54 kDa protein.